Reading from the N-terminus, the 254-residue chain is Triosephosphate isomerase (254 aa).

Position 12-14 (12-14) interacts with substrate; it reads NWK. His-99 (electrophile) is an active-site residue. Glu-169 (proton acceptor) is an active-site residue. Substrate is bound by residues Gly-175, Ser-214, and 235-236; that span reads GG.

It belongs to the triosephosphate isomerase family. Homodimer.

Its subcellular location is the cytoplasm. The enzyme catalyses D-glyceraldehyde 3-phosphate = dihydroxyacetone phosphate. It participates in carbohydrate biosynthesis; gluconeogenesis. The protein operates within carbohydrate degradation; glycolysis; D-glyceraldehyde 3-phosphate from glycerone phosphate: step 1/1. Functionally, involved in the gluconeogenesis. Catalyzes stereospecifically the conversion of dihydroxyacetone phosphate (DHAP) to D-glyceraldehyde-3-phosphate (G3P). This chain is Triosephosphate isomerase, found in Chelativorans sp. (strain BNC1).